Here is a 234-residue protein sequence, read N- to C-terminus: Ubiquitin thioesterase OTUB2 (234 aa).

One can recognise an OTU domain in the interval 40–231; sequence TAIRKTKGDG…TSHYNILYAA (192 aa). Asp-48 is an active-site residue. The active-site Nucleophile is Cys-51. The active site involves His-224.

It belongs to the peptidase C65 family. Widely expressed. Expressed at higher level in brain.

The enzyme catalyses Thiol-dependent hydrolysis of ester, thioester, amide, peptide and isopeptide bonds formed by the C-terminal Gly of ubiquitin (a 76-residue protein attached to proteins as an intracellular targeting signal).. In terms of biological role, hydrolase that can remove conjugated ubiquitin from proteins in vitro and may therefore play an important regulatory role at the level of protein turnover by preventing degradation. Mediates deubiquitination of 'Lys-11'-,'Lys-48'- and 'Lys-63'-linked polyubiquitin chains, with a preference for 'Lys-63'-linked polyubiquitin chains. The chain is Ubiquitin thioesterase OTUB2 (OTUB2) from Homo sapiens (Human).